Here is a 587-residue protein sequence, read N- to C-terminus: Arginine--tRNA ligase (587 aa).

The 'HIGH' region signature appears at 126–136 (ANPTGPLHVGH).

This sequence belongs to the class-I aminoacyl-tRNA synthetase family. In terms of assembly, monomer.

It localises to the cytoplasm. It catalyses the reaction tRNA(Arg) + L-arginine + ATP = L-arginyl-tRNA(Arg) + AMP + diphosphate. The chain is Arginine--tRNA ligase from Aromatoleum aromaticum (strain DSM 19018 / LMG 30748 / EbN1) (Azoarcus sp. (strain EbN1)).